A 335-amino-acid chain; its full sequence is NmrA-like family domain-containing oxidoreductase hkm9 (335 aa).

Residues 12–17, 38–42, 59–60, 80–82, Lys137, and 161–164 each bind NADP(+); these read GATGNQ, RNPNS, DG, INS, and YLEN.

It belongs to the NmrA-type oxidoreductase family.

It functions in the pathway secondary metabolite biosynthesis. In terms of biological role, nmrA-like family domain-containing oxidoreductase; part of the gene cluster that mediates the biosynthesis of hancockiamides, an unusual new family of N-cinnamoylated piperazines. The NRPS hkm10 and the NmrA-like reductase hkm9 are proposed to convert two molecules of L-Phe to the intermediary piperazine called xenocockiamide A. Xenocockiamide A is then converted to hancockiamide D via a series of hydroxylations and O-methylations. The tyrosinase hkm6 may catalyze an aromatic hydroxylation, then the 2-oxoglutarate-dependent Fe(II) dioxygenase hkm4 and the FAD-dependent phenol hydroxylase hkm7 may catalyze consecutive hydroxylations to install 2 more hydroxy groups, and the methyltransferase hkm8 probably catalyzes two methylations using 2 molecules of S-adenosyl-L-methionine (SAM). The NRPS hkm11 activates and transfers trans-cinnamate supplied by the PAL hkm12 to hancockiamide D and produces hancockiamide A. NRPS Hkm11 has the flexibility to tolerate the bulky hancockiamide G as a substrate and the absence of the acetyl-transferase hkm3 opens up the opportunity for hkm11 to introduce a second N-cinnamoyl moiety. The cytochrome P450 monooxygenase hkm5 catalyzes the methylenedioxy bridge formation, converting hancockiamide A into hancockiamide G. Hkm5 can also convert hancockiamide B into hancockiamide C, and hancockiamide D into hancockiamide H. The N-acetyltransferase hkm3 finally transfers an acetyl group to 1-N of piperazine, converting hancockiamide A into hancockiamide B and hancockiamide G into hancockiamide C. This chain is NmrA-like family domain-containing oxidoreductase hkm9, found in Aspergillus hancockii.